A 398-amino-acid polypeptide reads, in one-letter code: Putative L-rhamnonate dehydratase (398 aa).

Substrate-binding residues include H29 and R55. The Mg(2+) site is built by D221, E247, and E274. H324 (proton acceptor) is an active-site residue. E344 provides a ligand contact to substrate.

Belongs to the mandelate racemase/muconate lactonizing enzyme family. RhamD subfamily. It depends on Mg(2+) as a cofactor.

It catalyses the reaction L-rhamnonate = 2-dehydro-3-deoxy-L-rhamnonate + H2O. Functionally, catalyzes the dehydration of L-rhamnonate to 2-keto-3-deoxy-L-rhamnonate (KDR). The chain is Putative L-rhamnonate dehydratase from Caldivirga maquilingensis (strain ATCC 700844 / DSM 13496 / JCM 10307 / IC-167).